We begin with the raw amino-acid sequence, 864 residues long: Dynamin-1 (864 aa).

Residues 28–294 (DLDLPQIAVV…LTNHIRDTLP (267 aa)) enclose the Dynamin-type G domain. Residues 38–45 (GGQSAGKS) are G1 motif. Positions 41, 43, 44, 45, 46, 59, and 60 each coordinate GDP. Residues 64–66 (VTR) form a G2 motif region. Position 80 is a phosphotyrosine (Tyr-80). Tyr-125 is subject to 3'-nitrotyrosine; alternate. Position 125 is a phosphotyrosine; alternate (Tyr-125). The G3 motif stretch occupies residues 136–139 (DLPG). Residues 205-208 (TKLD) are G4 motif. The GDP site is built by Lys-206, Asp-208, Asp-211, Asn-236, Arg-237, and Gln-239. The interval 235–238 (VNRS) is G5 motif. Phosphoserine is present on residues Ser-306 and Ser-347. At Tyr-354 the chain carries Phosphotyrosine. The residue at position 512 (Ser-512) is a Phosphoserine. In terms of domain architecture, PH spans 519–625 (LVIRKGWLTI…WKASFLRAGV (107 aa)). One can recognise a GED domain in the interval 659–750 (VETIRNLVDS…IIGDINTTTV (92 aa)). A disordered region spans residues 767–864 (SVPAGRRSPT…PESPRPPFDL (98 aa)). A Phosphoserine; by GSK3-beta modification is found at Ser-774. Ser-778 bears the Phosphoserine mark. Residue Arg-796 is modified to Omega-N-methylarginine. Ser-822 carries the phosphoserine modification. Pro residues predominate over residues 825–843 (PFGPPPQVPSRPNRAPPGV). A phosphoserine mark is found at Ser-851 and Ser-857.

It belongs to the TRAFAC class dynamin-like GTPase superfamily. Dynamin/Fzo/YdjA family. Homodimer; homodimerization is mediated by the dynamin-type G domain which promotes assembly-stimulated GTPase activity. Homo-tetramer formed from two dimers in the absence of lipid. Oligomerizes into a helical polymer that self-assembles around the vesicle membrane, when associated to the menbrane through lipid binding. Interacts (via C-terminal proline-rich domain (PRD)) with SNX9 (via SH3 domain); this interaction allows regulation of DNM1 self-assembly during late stages of endocytic vesicle formation and supports DNM1's early functions in accelerating clathrin-coated pits (CCPs) maturation in non neuronals cell. Interacts (via C-terminal proline-rich domain (PRD)) with MYO1E (via SH3 domain); this interaction regulates receptor-mediated endocytosis. Interacts with SNX33 (via SH3 domain); this interaction decreases DNM1-dependent endocytosis. Interacts with DIAPH1. Interacts with GRB2 (via SH3 domain); this interaction mediates disassembly of DNM1 polymers, therefore modulates self-assembly. Forms a complex with BIN1 (via SH3 domain) and SH3GL2 (via SH3 domain). Forms a complex with SH3GL2 (via SH3 domain) and AMPH (via SH3 domain). Forms a complex with SH3GL2 (via SH3 domain) and SYNJ1. Interacts with AMPH. Interacts (via C-terminal proline-rich domain (PRD)) with SYT1; this interaction facilitates vesicle fission during clathrin-mediated endocytosis (CME). Interacts (via C-terminal proline-rich domain (PRD)) with PLCG1 (via SH3 domain); this interaction stimulates the release of GDP from DNM1 and enhances DNM1-dependent endocytosis. Interacts with SNPH; this interaction inhibits the binding of DNM1 to AMPH and DNM1-receptor-mediated endocytosis. Interacts with CAV1. Interacts with SH3GLB1 (via SH3 domain). Interacts with PACSIN1 (via SH3 domain), PACSIN2 (via SH3 domain) and PACSIN3 (via SH3 domain). Interacts with UNC119; this interaction decreases DNM1's GTPase activity and affects DNM1's interaction with AMPH. Interacts (GTP-bound form) with DNAJC6; this interaction allows clathrin-coated vesicle (CCV) formation at the plasma membrane. In terms of processing, phosphorylation at Ser-774 by GSK3B/GSK3-beta leads to inactivation of receptor-mediated endocytosis in non-neuronal cells. Dephosphorylation at Ser-774, through the EGFR downstream signaling, leads to activation and regulates early stages of clathrin-mediated endocytosis (CME). Phosphorylated by CDK5 leading to synaptic vesicle endocytosis (SVE) activation.

The protein localises to the cell membrane. The protein resides in the membrane. It localises to the clathrin-coated pit. It is found in the cytoplasmic vesicle. Its subcellular location is the presynapse. The protein localises to the secretory vesicle. The protein resides in the chromaffin granule. It carries out the reaction GTP + H2O = GDP + phosphate + H(+). With respect to regulation, GTPase activity is activated by 1-phosphatidyl-1D-myo-inositol 4,5-bisphosphate. GTPase activity is inhibited by the heterodimer G protein formed by GNB1 and GNG2 with an IC(50)=400 nM when DNM1 concentration is 5 nM. Its function is as follows. Catalyzes the hydrolysis of GTP and utilizes this energy to mediate vesicle scission and participates in many forms of endocytosis, such as clathrin-mediated endocytosis or synaptic vesicle endocytosis as well as rapid endocytosis (RE). Associates to the membrane, through lipid binding, and self-assembles into rings and stacks of interconnected rings through oligomerization to form a helical polymer around the vesicle membrane leading to constriction of invaginated coated pits around their necks. Self-assembly of the helical polymer induces membrane tubules narrowing until the polymer reaches a length sufficient to trigger GTP hydrolysis. Depending on the curvature imposed on the tubules, membrane detachment from the helical polymer upon GTP hydrolysis can cause spontaneous hemifission followed by complete fission. May play a role in regulating early stages of clathrin-mediated endocytosis in non-neuronal cells through its activation by dephosphorylation via the signaling downstream of EGFR. Controls vesicle size at a step before fission, during formation of membrane pits, at hippocampal synapses. Controls plastic adaptation of the synaptic vesicle recycling machinery to high levels of activity. Mediates rapid endocytosis (RE), a Ca(2+)-dependent and clathrin- and K(+)-independent process in chromaffin cells. Microtubule-associated force-producing protein involved in producing microtubule bundles and able to bind and hydrolyze GTP. Through its interaction with DNAJC6, acts during the early steps of clathrin-coated vesicle (CCV) formation. The protein is Dynamin-1 of Homo sapiens (Human).